The sequence spans 260 residues: Manganese transport system ATP-binding protein MntA (260 aa).

Positions 10–245 (ISVDGVSVTY…NLELTFGGLP (236 aa)) constitute an ABC transporter domain. Position 43-50 (43-50 (GPNGSGKS)) interacts with ATP.

It belongs to the ABC transporter superfamily.

In terms of biological role, part of an ATP-driven transport system for manganese. The protein is Manganese transport system ATP-binding protein MntA (mntA) of Synechocystis sp. (strain ATCC 27184 / PCC 6803 / Kazusa).